Consider the following 554-residue polypeptide: Developmental and secondary metabolism regulator ve-1 (554 aa).

The Velvet domain maps to 31–230 (GRKLWYSLRV…AEQGCRVRIR (200 aa)). The short motif at 45-50 (LRARAC) is the Nuclear localization signal element. Positions 166-175 (TKEDKDKDPE) are enriched in basic and acidic residues. Disordered stretches follow at residues 166–190 (TKED…SFDF), 232–430 (DVRM…PHRL), and 465–528 (PRAY…VDDK). Residues 276-292 (RSMSGSTERTPYSSISD) show a composition bias toward polar residues. 2 stretches are compositionally biased toward pro residues: residues 363–372 (SYPPPPPPHQ) and 485–494 (LPPPPPPPPQ). Positions 455–487 (SPSNMAAPPYPRAYSVSNSGGLTSAGGYNQLPP) are PEST. Over residues 500–528 (RAHDQTFRADPEMRRYQDGARERESVDDK) the composition is skewed to basic and acidic residues.

The protein belongs to the velvet family. VeA subfamily. As to quaternary structure, component of the heterotrimeric velvet complex composed of lae-1, ve-1 and vel-2; Ve-1 acting as a bridging protein between lae-1 and vel-2.

The protein localises to the nucleus. The protein resides in the cytoplasm. Its function is as follows. Component of the velvet transcription factor complex that controls sexual/asexual developmental ratio in response to light, promoting sexual development in the darkness while stimulating asexual sporulation under illumination. The velvet complex hat acts as a global regulator for secondary metabolite gene expression. The protein is Developmental and secondary metabolism regulator ve-1 of Neurospora crassa (strain ATCC 24698 / 74-OR23-1A / CBS 708.71 / DSM 1257 / FGSC 987).